Here is a 277-residue protein sequence, read N- to C-terminus: NADPH-dependent 7-cyano-7-deazaguanine reductase (277 aa).

A substrate-binding site is contributed by 86 to 88; that stretch reads IES. An NADPH-binding site is contributed by 88-89; the sequence is SK. The active-site Thioimide intermediate is cysteine 185. The active-site Proton donor is the aspartate 192. 224–225 provides a ligand contact to substrate; the sequence is HE. 253–254 contacts NADPH; it reads RG.

Belongs to the GTP cyclohydrolase I family. QueF type 2 subfamily. Homodimer.

It localises to the cytoplasm. It carries out the reaction 7-aminomethyl-7-carbaguanine + 2 NADP(+) = 7-cyano-7-deazaguanine + 2 NADPH + 3 H(+). It functions in the pathway tRNA modification; tRNA-queuosine biosynthesis. Its function is as follows. Catalyzes the NADPH-dependent reduction of 7-cyano-7-deazaguanine (preQ0) to 7-aminomethyl-7-deazaguanine (preQ1). This chain is NADPH-dependent 7-cyano-7-deazaguanine reductase, found in Hydrogenovibrio crunogenus (strain DSM 25203 / XCL-2) (Thiomicrospira crunogena).